The chain runs to 393 residues: 26S proteasome regulatory subunit 10B (393 aa).

178-185 (GPPGTGKT) is a binding site for ATP.

The protein belongs to the AAA ATPase family.

The protein resides in the cytoplasm. It localises to the nucleus. In terms of biological role, the 26S proteasome is involved in the ATP-dependent degradation of ubiquitinated proteins. The regulatory (or ATPase) complex confers ATP dependency and substrate specificity to the 26S complex. This chain is 26S proteasome regulatory subunit 10B (psmC6), found in Dictyostelium discoideum (Social amoeba).